A 447-amino-acid polypeptide reads, in one-letter code: uncharacterized protein (447 aa).

Disordered stretches follow at residues 1–80 (MTFE…EQSS), 115–184 (ATTQ…PNNP), and 295–322 (LQDN…SSGI). The span at 11 to 32 (QRRDESAYRLGEEDGRQKGESS) shows a compositional bias: basic and acidic residues. The span at 42–51 (KNPSNVSFWS) shows a compositional bias: polar residues. Over residues 61–72 (VKTDRPQFHRAD) the composition is skewed to basic and acidic residues. The segment covering 115-158 (ATTQSSPISTSFNPQLPSNSNTNRFDFGSESQLSSNYTNDTGLS) has biased composition (polar residues). Residues 300–321 (SLTSQGSNLSSQNSGLSSSSSG) show a composition bias toward low complexity. A run of 2 helical transmembrane segments spans residues 385 to 405 (FMFL…ASFL) and 424 to 444 (IINR…IGLG).

It localises to the membrane. This is an uncharacterized protein from Schizosaccharomyces pombe (strain 972 / ATCC 24843) (Fission yeast).